Reading from the N-terminus, the 407-residue chain is Peptidase T (407 aa).

Zn(2+) is bound at residue H81. Residue D83 is part of the active site. D142 is a Zn(2+) binding site. The active-site Proton acceptor is E176. The Zn(2+) site is built by E177, D199, and H381.

It belongs to the peptidase M20B family. Zn(2+) serves as cofactor.

It localises to the cytoplasm. It catalyses the reaction Release of the N-terminal residue from a tripeptide.. Its function is as follows. Cleaves the N-terminal amino acid of tripeptides. This Streptococcus pneumoniae (strain P1031) protein is Peptidase T.